We begin with the raw amino-acid sequence, 230 residues long: UPF0173 metal-dependent hydrolase Sca_1312 (230 aa).

Belongs to the UPF0173 family.

In Staphylococcus carnosus (strain TM300), this protein is UPF0173 metal-dependent hydrolase Sca_1312.